The chain runs to 179 residues: Large ribosomal subunit protein uL5 (179 aa).

Belongs to the universal ribosomal protein uL5 family. Part of the 50S ribosomal subunit; part of the 5S rRNA/L5/L18/L25 subcomplex. Contacts the 5S rRNA and the P site tRNA. Forms a bridge to the 30S subunit in the 70S ribosome.

In terms of biological role, this is one of the proteins that bind and probably mediate the attachment of the 5S RNA into the large ribosomal subunit, where it forms part of the central protuberance. In the 70S ribosome it contacts protein S13 of the 30S subunit (bridge B1b), connecting the 2 subunits; this bridge is implicated in subunit movement. Contacts the P site tRNA; the 5S rRNA and some of its associated proteins might help stabilize positioning of ribosome-bound tRNAs. The polypeptide is Large ribosomal subunit protein uL5 (Dictyoglomus turgidum (strain DSM 6724 / Z-1310)).